The primary structure comprises 312 residues: Heterotepalin-4 (312 aa).

The first 22 residues, 1–22 (MKSMLVVTISVWLILAPTSTWA), serve as a signal peptide directing secretion. 2 disulfides stabilise this stretch: Cys56–Cys280 and Cys107–Cys128. Glu197 is an active-site residue. A propeptide spanning residues 284–312 (YNQNAMFPQLIMSTYYNYMANLGDLFEEF) is cleaved from the precursor.

The enzyme catalyses Endohydrolysis of the N-glycosidic bond at one specific adenosine on the 28S rRNA.. Functionally, inhibits protein synthesis in vitro. In Phytolacca heterotepala (Mexican pokeweed), this protein is Heterotepalin-4.